A 115-amino-acid chain; its full sequence is NADH-ubiquinone oxidoreductase chain 3 (115 aa).

A run of 3 helical transmembrane segments spans residues 4-24, 55-75, and 83-103; these read LTALLVNITLSMLLIIIAFWL, FFLVAITFLLFDLEIALLLPL, and YINIMMSTAFILVSVLALGLA.

The protein belongs to the complex I subunit 3 family. In terms of assembly, core subunit of respiratory chain NADH dehydrogenase (Complex I) which is composed of 45 different subunits. Interacts with TMEM186. Interacts with TMEM242.

The protein localises to the mitochondrion inner membrane. It carries out the reaction a ubiquinone + NADH + 5 H(+)(in) = a ubiquinol + NAD(+) + 4 H(+)(out). In terms of biological role, core subunit of the mitochondrial membrane respiratory chain NADH dehydrogenase (Complex I) which catalyzes electron transfer from NADH through the respiratory chain, using ubiquinone as an electron acceptor. Essential for the catalytic activity of complex I. This Peromyscus polionotus (Oldfield mouse) protein is NADH-ubiquinone oxidoreductase chain 3.